A 148-amino-acid chain; its full sequence is Basic leucine zipper 4 (148 aa).

The 50-residue stretch at 48 to 97 (DDKKRRRTISNRESAKRSRMKKKKRFEELTEEVNRLNIRNQELKNRLANV) folds into the bZIP domain. Residues 50–70 (KKRRRTISNRESAKRSRMKKK) are disordered. The segment at 50 to 72 (KKRRRTISNRESAKRSRMKKKKR) is basic motif. The interval 76 to 90 (LTEEVNRLNIRNQEL) is leucine-zipper.

The protein resides in the nucleus. Probable transcription factor involved in somatic embryogenesis. Acts as a positive regulator of BHLH109. This chain is Basic leucine zipper 4, found in Arabidopsis thaliana (Mouse-ear cress).